A 506-amino-acid polypeptide reads, in one-letter code: Galactose/methyl galactoside import ATP-binding protein MglA (506 aa).

2 consecutive ABC transporter domains span residues 14–249 and 260–506; these read LTMT…VGRE and VPKE…AKYL. 46–53 contacts ATP; sequence GENGAGKS.

Belongs to the ABC transporter superfamily. Galactose/methyl galactoside importer (TC 3.A.1.2.3) family. In terms of assembly, the complex is composed of one ATP-binding protein (MglA), two transmembrane proteins (MglC) and a solute-binding protein (MglB).

Its subcellular location is the cell inner membrane. The catalysed reaction is D-galactose(out) + ATP + H2O = D-galactose(in) + ADP + phosphate + H(+). It catalyses the reaction methyl beta-D-galactoside(out) + ATP + H2O = methyl beta-D-galactoside(in) + ADP + phosphate + H(+). Part of the ABC transporter complex MglABC involved in galactose/methyl galactoside import. Responsible for energy coupling to the transport system. In Haemophilus influenzae (strain 86-028NP), this protein is Galactose/methyl galactoside import ATP-binding protein MglA.